The primary structure comprises 208 residues: Uracil phosphoribosyltransferase (208 aa).

5-phospho-alpha-D-ribose 1-diphosphate is bound by residues arginine 78, arginine 103, and 130 to 138 (DPMLATGGS). Uracil-binding positions include isoleucine 193 and 198–200 (GDA). Aspartate 199 lines the 5-phospho-alpha-D-ribose 1-diphosphate pocket.

The protein belongs to the UPRTase family. Mg(2+) serves as cofactor.

It carries out the reaction UMP + diphosphate = 5-phospho-alpha-D-ribose 1-diphosphate + uracil. Its pathway is pyrimidine metabolism; UMP biosynthesis via salvage pathway; UMP from uracil: step 1/1. Its activity is regulated as follows. Allosterically activated by GTP. Catalyzes the conversion of uracil and 5-phospho-alpha-D-ribose 1-diphosphate (PRPP) to UMP and diphosphate. In Enterobacter sp. (strain 638), this protein is Uracil phosphoribosyltransferase.